The chain runs to 262 residues: Glutamate racemase (262 aa).

Residues Asp5–Ser6 and Tyr37–Gly38 contribute to the substrate site. The active-site Proton donor/acceptor is the Cys69. Substrate is bound at residue Asn70 to Thr71. Catalysis depends on Cys181, which acts as the Proton donor/acceptor. Residue Thr182–His183 coordinates substrate.

It belongs to the aspartate/glutamate racemases family.

The enzyme catalyses L-glutamate = D-glutamate. The protein operates within cell wall biogenesis; peptidoglycan biosynthesis. In terms of biological role, provides the (R)-glutamate required for cell wall biosynthesis. This Buchnera aphidicola subsp. Acyrthosiphon pisum (strain Tuc7) protein is Glutamate racemase.